The chain runs to 67 residues: Small ribosomal subunit protein bS21 (67 aa).

This sequence belongs to the bacterial ribosomal protein bS21 family.

This chain is Small ribosomal subunit protein bS21, found in Granulibacter bethesdensis (strain ATCC BAA-1260 / CGDNIH1).